The sequence spans 425 residues: Serine--tRNA ligase (425 aa).

231–233 is an L-serine binding site; it reads TAE. Residues 262–264 and valine 278 contribute to the ATP site; that span reads RTE. Glutamate 285 serves as a coordination point for L-serine. ATP is bound at residue 349–352; sequence EVTS. Residue threonine 384 participates in L-serine binding.

Belongs to the class-II aminoacyl-tRNA synthetase family. Type-1 seryl-tRNA synthetase subfamily. In terms of assembly, homodimer. The tRNA molecule binds across the dimer.

It localises to the cytoplasm. The catalysed reaction is tRNA(Ser) + L-serine + ATP = L-seryl-tRNA(Ser) + AMP + diphosphate + H(+). It catalyses the reaction tRNA(Sec) + L-serine + ATP = L-seryl-tRNA(Sec) + AMP + diphosphate + H(+). It participates in aminoacyl-tRNA biosynthesis; selenocysteinyl-tRNA(Sec) biosynthesis; L-seryl-tRNA(Sec) from L-serine and tRNA(Sec): step 1/1. Functionally, catalyzes the attachment of serine to tRNA(Ser). Is also able to aminoacylate tRNA(Sec) with serine, to form the misacylated tRNA L-seryl-tRNA(Sec), which will be further converted into selenocysteinyl-tRNA(Sec). This Dictyoglomus thermophilum (strain ATCC 35947 / DSM 3960 / H-6-12) protein is Serine--tRNA ligase.